Consider the following 499-residue polypeptide: Pyruvate kinase (499 aa).

Arg-50 is a substrate binding site. Asn-52, Ser-54, Asp-84, and Thr-85 together coordinate K(+). ATP is bound at residue 52–55 (NFSH). Residue Arg-91 coordinates ATP. Glu-241 contributes to the Mg(2+) binding site. Substrate contacts are provided by Gly-264, Asp-265, and Thr-297. Asp-265 lines the Mg(2+) pocket.

The protein belongs to the pyruvate kinase family. As to quaternary structure, homotetramer. Requires Mg(2+) as cofactor. K(+) is required as a cofactor.

It catalyses the reaction pyruvate + ATP = phosphoenolpyruvate + ADP + H(+). It functions in the pathway carbohydrate degradation; glycolysis; pyruvate from D-glyceraldehyde 3-phosphate: step 5/5. With respect to regulation, activated by fructose 2,6-bisphosphate, activated by the effector in a non cooperative manner. The polypeptide is Pyruvate kinase (PYK) (Leishmania mexicana).